The following is a 20-amino-acid chain: Kassinatuerin-2 (20 aa).

At isoleucine 20 the chain carries Isoleucine amide.

As to expression, expressed by the skin dorsal glands.

The protein localises to the secreted. Its function is as follows. Has no antimicrobial activities against bacteria (E.coli and S.aureus) nor against the fungus C.albicans. This is Kassinatuerin-2 from Kassina senegalensis (Senegal running frog).